We begin with the raw amino-acid sequence, 85 residues long: Large ribosomal subunit protein bL27 (85 aa).

Belongs to the bacterial ribosomal protein bL27 family.

In Xylella fastidiosa (strain 9a5c), this protein is Large ribosomal subunit protein bL27.